A 299-amino-acid polypeptide reads, in one-letter code: 4-sulfomuconolactone hydrolase (299 aa).

Belongs to the metallo-dependent hydrolases superfamily. Sulfomuconolactone hydrolase family. As to quaternary structure, monomer. Zn(2+) serves as cofactor.

It carries out the reaction 4-sulfomuconolactone + H2O = maleylacetate + sulfite + 2 H(+). Involved in the degradation of 4-sulfocatechol which is a central intermediate in the degradation of substituted sulfonated benzenes. Catalyzes the hydrolytical desulfonation of 4-sulfomuconolactone to yield maleylacetate. The polypeptide is 4-sulfomuconolactone hydrolase (Rhizobium radiobacter (Agrobacterium tumefaciens)).